Reading from the N-terminus, the 733-residue chain is Catalase-peroxidase (733 aa).

The tryptophyl-tyrosyl-methioninium (Trp-Tyr) (with M-245) cross-link spans 96 to 219; it reads WHSAGTYRTG…LAAVQMGLIY (124 aa). Residue H97 is the Proton acceptor of the active site. Positions 219-245 form a cross-link, tryptophyl-tyrosyl-methioninium (Tyr-Met) (with W-96); that stretch reads YVNPEGPNGNPDPLAAAKDIRETFARM. Residue H260 participates in heme b binding.

Belongs to the peroxidase family. Peroxidase/catalase subfamily. Homodimer or homotetramer. Requires heme b as cofactor. Post-translationally, formation of the three residue Trp-Tyr-Met cross-link is important for the catalase, but not the peroxidase activity of the enzyme.

It catalyses the reaction H2O2 + AH2 = A + 2 H2O. It carries out the reaction 2 H2O2 = O2 + 2 H2O. Its function is as follows. Bifunctional enzyme with both catalase and broad-spectrum peroxidase activity. This is Catalase-peroxidase from Geobacter sp. (strain M21).